A 434-amino-acid chain; its full sequence is Cobyrinate a,c-diamide synthase (434 aa).

The 192-residue stretch at Lys-239–Leu-430 folds into the GATase cobBQ-type domain. Cys-320 acts as the Nucleophile in catalysis.

The protein belongs to the CobB/CbiA family. The cofactor is Mg(2+).

It carries out the reaction cob(II)yrinate + 2 L-glutamine + 2 ATP + 2 H2O = cob(II)yrinate a,c diamide + 2 L-glutamate + 2 ADP + 2 phosphate + 2 H(+). Its pathway is cofactor biosynthesis; adenosylcobalamin biosynthesis; cob(II)yrinate a,c-diamide from sirohydrochlorin (anaerobic route): step 10/10. Catalyzes the ATP-dependent amidation of the two carboxylate groups at positions a and c of cobyrinate, using either L-glutamine or ammonia as the nitrogen source. The polypeptide is Cobyrinate a,c-diamide synthase (Saccharolobus solfataricus (strain ATCC 35092 / DSM 1617 / JCM 11322 / P2) (Sulfolobus solfataricus)).